We begin with the raw amino-acid sequence, 139 residues long: Cell division protein SepF (139 aa).

This sequence belongs to the SepF family. As to quaternary structure, homodimer. Interacts with FtsZ.

It localises to the cytoplasm. Functionally, cell division protein that is part of the divisome complex and is recruited early to the Z-ring. Probably stimulates Z-ring formation, perhaps through the cross-linking of FtsZ protofilaments. Its function overlaps with FtsA. This Coprothermobacter proteolyticus (strain ATCC 35245 / DSM 5265 / OCM 4 / BT) protein is Cell division protein SepF.